Reading from the N-terminus, the 42-residue chain is Photosystem I reaction center subunit IX (42 aa).

The chain crosses the membrane as a helical span at residues 7–27 (YLSVAPVLSTLWFVALAGLLI).

The protein belongs to the PsaJ family.

Its subcellular location is the plastid. The protein resides in the chloroplast thylakoid membrane. In terms of biological role, may help in the organization of the PsaE and PsaF subunits. The protein is Photosystem I reaction center subunit IX of Atropa belladonna (Belladonna).